The primary structure comprises 460 residues: Zinc transporter 6 (460 aa).

Residues 1–33 are Cytoplasmic-facing; sequence MGTIHLFRKPQRSFFGKLLQEFRLVAADRRSWK. Residues 34–54 form a helical membrane-spanning segment; sequence ILLFGAINVLCTGFLLMWCSS. At 55-64 the chain is on the extracellular side; the sequence is TNSIALTAYT. A helical transmembrane segment spans residues 65-85; that stretch reads YLTIFDLFSLITCLISYWVMM. Residues 86–98 lie on the Cytoplasmic side of the membrane; it reads RKPSPVYSFGFER. The chain crosses the membrane as a helical span at residues 99–119; that stretch reads LEVLAVFASTVLAQLGALFIL. The Extracellular portion of the chain corresponds to 120-134; sequence KESAERFLEQPEIHT. A helical membrane pass occupies residues 135 to 155; that stretch reads GRLLVGTFVALSFNLFTMLSI. The Cytoplasmic portion of the chain corresponds to 156 to 200; sequence RNKPFAYVSEAASTSWLQEHVADLSRSLCGLIPGLSSIFLPRMNP. A helical transmembrane segment spans residues 201 to 221; that stretch reads FVLIDLAGAFALCITYMLIEI. Over 222-223 the chain is Extracellular; that stretch reads NN. Residues 224–244 form a helical membrane-spanning segment; the sequence is YFAVDTASAIAIALMTFGTMY. Residues 245–460 are Cytoplasmic-facing; the sequence is PMSVYSGKVL…GINRMGQPRP (216 aa). The tract at residues 371–390 is disordered; that stretch reads TPVTSTPAKPSSPPPEFSFN.

This sequence belongs to the cation diffusion facilitator (CDF) transporter (TC 2.A.4) family. SLC30A subfamily. As to quaternary structure, heterodimer with SLC30A5; form a functional zinc ion transmembrane transporter. As to expression, expressed in brain and liver, and to a lower extent also in lung. Highly expressed in brain (at protein level).

Its subcellular location is the golgi apparatus. The protein localises to the trans-Golgi network membrane. Has probably no intrinsic transporter activity but together with SLC30A5 forms a functional zinc ion:proton antiporter heterodimer, mediating zinc entry into the lumen of organelles along the secretory pathway. As part of that zinc ion:proton antiporter, contributes to zinc ion homeostasis within the early secretory pathway and regulates the activation and folding of enzymes like alkaline phosphatases and enzymes involved in phosphatidylinositol glycan anchor biosynthesis. The protein is Zinc transporter 6 (Slc30a6) of Mus musculus (Mouse).